We begin with the raw amino-acid sequence, 30 residues long: Trypsin inhibitor 6 (30 aa).

Cystine bridges form between Cys-4-Cys-21, Cys-11-Cys-23, and Cys-17-Cys-29.

This sequence belongs to the protease inhibitor I7 (squash-type serine protease inhibitor) family.

Its subcellular location is the secreted. Its function is as follows. Strongly inhibits trypsin, weakly inhibits chymotrypsin. In Cyclanthera pedata (Achocha), this protein is Trypsin inhibitor 6.